Reading from the N-terminus, the 398-residue chain is Homeobox protein knotted-1-like 1 (398 aa).

3 disordered regions span residues 20–61, 78–102, and 241–273; these read SPIS…HHHQ, NCFRSDHDQPNNNNNPSVKSEASSS, and LNNPDGKSDNMGSSDEEQENNSGGETELPEIDP. The span at 23–56 shows a compositional bias: low complexity; that stretch reads SSSNKNDNTSDTNNNNNNNNSSNYGPGYNNTNNN. Over residues 87–102 the composition is skewed to polar residues; it reads PNNNNNPSVKSEASSS. One can recognise an ELK domain in the interval 279–299; that stretch reads ELKNHLLKKYSGYLSSLKQEL. Residues 300–363 constitute a DNA-binding region (homeobox; TALE-type); the sequence is SKKKKKGKLP…NQRKRHWKPS (64 aa).

Belongs to the TALE/KNOX homeobox family. In terms of assembly, may form heterodimeric complex with the TALE/BELL proteins BEL1, BLH2, BLH8/PNF and BLH9/PNY. Interacts with OFP1, OFP2, OFP4, OFP6 and OFP12. Interacts with CCT7 and CCT8. Interacts with KNATM-B. Binds to AGO10/PNH. Interacts with BZIP30. In terms of tissue distribution, expressed in the vegetative meristem. Present in the base of flower primordia.

The protein localises to the nucleus. In terms of biological role, may play a role in meristem function, and may be involved in maintaining cells in an undifferentiated, meristematic state, and its expression disappears at the same time the shoot apex undergoes the transition from vegetative to reproductive development. Positive regulator of LATERAL ORGAN BOUNDARIES (LOB). Probably binds to the DNA sequence 5'-TGAC-3'. Able to traffic from the L1 to the L2/L3 layers of the meristem, presumably through plasmodesmata. In Arabidopsis thaliana (Mouse-ear cress), this protein is Homeobox protein knotted-1-like 1 (KNAT1).